The sequence spans 126 residues: MKIEFNSEFTQEGQEKNINFVSPVEISEYEGATVYEFSEPSKEHLSRIEINSNSNEVLIITDSMTMILKLNEEVENAIALGQGKFFLKSLLNKLEHNDSESFFAYVLKDTSGNELACFKITLKIFE.

This is an uncharacterized protein from Mycoplasmopsis pulmonis (strain UAB CTIP) (Mycoplasma pulmonis).